Reading from the N-terminus, the 143-residue chain is Putative glycerol transporter Lin0368 (143 aa).

4 helical membrane passes run 6 to 26, 27 to 47, 60 to 80, and 90 to 110; these read GMIG…PLAE, NYGI…MWFM, AAFV…DVFM, and LPTI…AAAI. The disordered stretch occupies residues 118 to 143; the sequence is HEAKQEKTEPGMNIKEEERLNENQLV.

The protein localises to the membrane. In terms of biological role, could be involved in the glycerol uptake either via facilitated diffusion or active transport. The sequence is that of Putative glycerol transporter Lin0368 from Listeria innocua serovar 6a (strain ATCC BAA-680 / CLIP 11262).